Reading from the N-terminus, the 254-residue chain is Hydroxyethylthiazole kinase (254 aa).

Residue Met40 coordinates substrate. Positions 116 and 162 each coordinate ATP. Gly189 serves as a coordination point for substrate.

This sequence belongs to the Thz kinase family. It depends on Mg(2+) as a cofactor.

It catalyses the reaction 5-(2-hydroxyethyl)-4-methylthiazole + ATP = 4-methyl-5-(2-phosphooxyethyl)-thiazole + ADP + H(+). It functions in the pathway cofactor biosynthesis; thiamine diphosphate biosynthesis; 4-methyl-5-(2-phosphoethyl)-thiazole from 5-(2-hydroxyethyl)-4-methylthiazole: step 1/1. Its function is as follows. Catalyzes the phosphorylation of the hydroxyl group of 4-methyl-5-beta-hydroxyethylthiazole (THZ). The protein is Hydroxyethylthiazole kinase of Limosilactobacillus fermentum (strain NBRC 3956 / LMG 18251) (Lactobacillus fermentum).